The chain runs to 206 residues: Large ribosomal subunit protein uL4 (206 aa).

Residues 46-95 (GNRAQKTRAEVKHSTKKPWRQKGTGRARSGMTSSPLWRKGGRAFPNKPDE) are disordered. Over residues 59 to 70 (STKKPWRQKGTG) the composition is skewed to basic residues.

This sequence belongs to the universal ribosomal protein uL4 family. In terms of assembly, part of the 50S ribosomal subunit.

One of the primary rRNA binding proteins, this protein initially binds near the 5'-end of the 23S rRNA. It is important during the early stages of 50S assembly. It makes multiple contacts with different domains of the 23S rRNA in the assembled 50S subunit and ribosome. Its function is as follows. Forms part of the polypeptide exit tunnel. In Neisseria meningitidis serogroup C (strain 053442), this protein is Large ribosomal subunit protein uL4.